Reading from the N-terminus, the 161-residue chain is ATP synthase subunit b' (161 aa).

Residues 30–47 (VMAIQFLVLAALLNKLFY) form a helical membrane-spanning segment.

It belongs to the ATPase B chain family. F-type ATPases have 2 components, F(1) - the catalytic core - and F(0) - the membrane proton channel. F(1) has five subunits: alpha(3), beta(3), gamma(1), delta(1), epsilon(1). F(0) has four main subunits: a(1), b(1), b'(1) and c(10-14). The alpha and beta chains form an alternating ring which encloses part of the gamma chain. F(1) is attached to F(0) by a central stalk formed by the gamma and epsilon chains, while a peripheral stalk is formed by the delta, b and b' chains.

The protein resides in the cellular thylakoid membrane. Functionally, f(1)F(0) ATP synthase produces ATP from ADP in the presence of a proton or sodium gradient. F-type ATPases consist of two structural domains, F(1) containing the extramembraneous catalytic core and F(0) containing the membrane proton channel, linked together by a central stalk and a peripheral stalk. During catalysis, ATP synthesis in the catalytic domain of F(1) is coupled via a rotary mechanism of the central stalk subunits to proton translocation. In terms of biological role, component of the F(0) channel, it forms part of the peripheral stalk, linking F(1) to F(0). The b'-subunit is a diverged and duplicated form of b found in plants and photosynthetic bacteria. This Picosynechococcus sp. (strain ATCC 27264 / PCC 7002 / PR-6) (Agmenellum quadruplicatum) protein is ATP synthase subunit b'.